The chain runs to 152 residues: Deoxyuridine 5'-triphosphate nucleotidohydrolase (152 aa).

Substrate-binding positions include 71 to 73 (RSG), N84, 88 to 90 (LID), and M98.

This sequence belongs to the dUTPase family. It depends on Mg(2+) as a cofactor.

It carries out the reaction dUTP + H2O = dUMP + diphosphate + H(+). It functions in the pathway pyrimidine metabolism; dUMP biosynthesis; dUMP from dCTP (dUTP route): step 2/2. This enzyme is involved in nucleotide metabolism: it produces dUMP, the immediate precursor of thymidine nucleotides and it decreases the intracellular concentration of dUTP so that uracil cannot be incorporated into DNA. The chain is Deoxyuridine 5'-triphosphate nucleotidohydrolase from Photorhabdus laumondii subsp. laumondii (strain DSM 15139 / CIP 105565 / TT01) (Photorhabdus luminescens subsp. laumondii).